Here is a 557-residue protein sequence, read N- to C-terminus: Potassium-transporting ATPase potassium-binding subunit (557 aa).

A run of 12 helical transmembrane segments spans residues 5-25, 63-83, 132-152, 170-190, 253-273, 283-303, 329-349, 356-376, 379-399, 416-436, 484-504, and 526-546; these read GFLL…PLGS, LCAI…MLLG, GLTV…FALI, LLRI…LFFI, FVQM…FGEV, LLWA…WAEV, VLVS…AVIA, ALGG…FGGV, GLYG…LMIG, LTAL…ALAM, LLAF…MAIA, and LFVG…FIPA.

Belongs to the KdpA family. The system is composed of three essential subunits: KdpA, KdpB and KdpC.

It is found in the cell inner membrane. Functionally, part of the high-affinity ATP-driven potassium transport (or Kdp) system, which catalyzes the hydrolysis of ATP coupled with the electrogenic transport of potassium into the cytoplasm. This subunit binds the periplasmic potassium ions and delivers the ions to the membrane domain of KdpB through an intramembrane tunnel. The protein is Potassium-transporting ATPase potassium-binding subunit of Escherichia coli (strain SE11).